Here is a 66-residue protein sequence, read N- to C-terminus: Gas vesicle protein A (66 aa).

This sequence belongs to the gas vesicle GvpA family. The gas vesicle shell is 2 nm thick and consists of a single layer of this protein. It forms helical ribs nearly perpendicular to the long axis of the vesicle.

It localises to the gas vesicle shell. In terms of biological role, gas vesicles are hollow, gas filled proteinaceous nanostructures found in some microorganisms. During planktonic growth they allow positioning of the organism at a favorable depth for light or nutrient acquisition. GvpA forms the protein shell. This chain is Gas vesicle protein A, found in Thiocapsa pendens (Amoebobacter pendens).